The primary structure comprises 380 residues: 3-isopropylmalate dehydratase large subunit (380 aa).

[4Fe-4S] cluster-binding residues include Cys262, Cys320, and Cys323.

This sequence belongs to the aconitase/IPM isomerase family. LeuC type 2 subfamily. In terms of assembly, heterodimer of LeuC and LeuD. The cofactor is [4Fe-4S] cluster.

It catalyses the reaction (2R,3S)-3-isopropylmalate = (2S)-2-isopropylmalate. Its pathway is amino-acid biosynthesis; L-leucine biosynthesis; L-leucine from 3-methyl-2-oxobutanoate: step 2/4. Catalyzes the isomerization between 2-isopropylmalate and 3-isopropylmalate, via the formation of 2-isopropylmaleate. This chain is 3-isopropylmalate dehydratase large subunit, found in Pyrococcus horikoshii (strain ATCC 700860 / DSM 12428 / JCM 9974 / NBRC 100139 / OT-3).